The sequence spans 347 residues: GTP 3',8-cyclase (347 aa).

The region spanning 10-242 (RLNRPIGVLR…ERINARWPLE (233 aa)) is the Radical SAM core domain. Residue R19 coordinates GTP. Residues C26 and C30 each coordinate [4Fe-4S] cluster. Y32 is a binding site for S-adenosyl-L-methionine. Position 33 (C33) interacts with [4Fe-4S] cluster. R65 lines the GTP pocket. G69 contributes to the S-adenosyl-L-methionine binding site. Residue T104 coordinates GTP. Residue S129 participates in S-adenosyl-L-methionine binding. K178 serves as a coordination point for GTP. Position 212 (M212) interacts with S-adenosyl-L-methionine. Positions 275 and 278 each coordinate [4Fe-4S] cluster. 280 to 282 (RLR) is a binding site for GTP. C292 serves as a coordination point for [4Fe-4S] cluster.

It belongs to the radical SAM superfamily. MoaA family. In terms of assembly, monomer and homodimer. It depends on [4Fe-4S] cluster as a cofactor.

It carries out the reaction GTP + AH2 + S-adenosyl-L-methionine = (8S)-3',8-cyclo-7,8-dihydroguanosine 5'-triphosphate + 5'-deoxyadenosine + L-methionine + A + H(+). Its pathway is cofactor biosynthesis; molybdopterin biosynthesis. Functionally, catalyzes the cyclization of GTP to (8S)-3',8-cyclo-7,8-dihydroguanosine 5'-triphosphate. The chain is GTP 3',8-cyclase from Synechococcus sp. (strain CC9605).